We begin with the raw amino-acid sequence, 359 residues long: Phospho-N-acetylmuramoyl-pentapeptide-transferase (359 aa).

Transmembrane regions (helical) follow at residues 27 to 47, 70 to 90, 97 to 117, 133 to 153, 167 to 187, 198 to 218, 238 to 258, 261 to 281, 287 to 307, and 336 to 356; these read GAFFTALIFGFIFGQPLINAL, TPTMGGLLILAALSLATLLWA, VWLVLGVTWCFGLIGFADDWA, LAIGFVVAFGAALIAAWVHPE, VLLNMGWMYVPFVMIVIVGSA, GLAIMPVMIAAGTLGVIAYAV, LLIFTAGLIGGGLGFLWYNAP, AVFMGDTGSLALGGALGAIAV, IVLAIVGGLFVAEAVSVIVQV, and QVVIRFWIISLILALIGLATL.

Belongs to the glycosyltransferase 4 family. MraY subfamily. Requires Mg(2+) as cofactor.

The protein resides in the cell inner membrane. The enzyme catalyses UDP-N-acetyl-alpha-D-muramoyl-L-alanyl-gamma-D-glutamyl-meso-2,6-diaminopimeloyl-D-alanyl-D-alanine + di-trans,octa-cis-undecaprenyl phosphate = di-trans,octa-cis-undecaprenyl diphospho-N-acetyl-alpha-D-muramoyl-L-alanyl-D-glutamyl-meso-2,6-diaminopimeloyl-D-alanyl-D-alanine + UMP. It functions in the pathway cell wall biogenesis; peptidoglycan biosynthesis. Functionally, catalyzes the initial step of the lipid cycle reactions in the biosynthesis of the cell wall peptidoglycan: transfers peptidoglycan precursor phospho-MurNAc-pentapeptide from UDP-MurNAc-pentapeptide onto the lipid carrier undecaprenyl phosphate, yielding undecaprenyl-pyrophosphoryl-MurNAc-pentapeptide, known as lipid I. This Jannaschia sp. (strain CCS1) protein is Phospho-N-acetylmuramoyl-pentapeptide-transferase.